We begin with the raw amino-acid sequence, 476 residues long: Adenosylhomocysteinase (476 aa).

Substrate-binding residues include threonine 65, aspartate 140, and glutamate 201. 202–204 (TTT) is a binding site for NAD(+). Substrate is bound by residues lysine 231 and aspartate 235. NAD(+)-binding positions include asparagine 236, 265–270 (GYGDVG), glutamate 288, asparagine 323, 344–346 (IGH), and asparagine 392.

The protein belongs to the adenosylhomocysteinase family. Requires NAD(+) as cofactor.

It is found in the cytoplasm. The catalysed reaction is S-adenosyl-L-homocysteine + H2O = L-homocysteine + adenosine. It participates in amino-acid biosynthesis; L-homocysteine biosynthesis; L-homocysteine from S-adenosyl-L-homocysteine: step 1/1. May play a key role in the regulation of the intracellular concentration of adenosylhomocysteine. This is Adenosylhomocysteinase from Bacteroides thetaiotaomicron (strain ATCC 29148 / DSM 2079 / JCM 5827 / CCUG 10774 / NCTC 10582 / VPI-5482 / E50).